The sequence spans 468 residues: UDP-N-acetylmuramate--L-alanine ligase (468 aa).

121-127 serves as a coordination point for ATP; sequence GSHGKTT.

Belongs to the MurCDEF family.

The protein resides in the cytoplasm. It catalyses the reaction UDP-N-acetyl-alpha-D-muramate + L-alanine + ATP = UDP-N-acetyl-alpha-D-muramoyl-L-alanine + ADP + phosphate + H(+). Its pathway is cell wall biogenesis; peptidoglycan biosynthesis. Cell wall formation. The chain is UDP-N-acetylmuramate--L-alanine ligase from Borreliella burgdorferi (strain ATCC 35210 / DSM 4680 / CIP 102532 / B31) (Borrelia burgdorferi).